Here is a 255-residue protein sequence, read N- to C-terminus: 4-diphosphocytidyl-2-C-methyl-D-erythritol kinase (255 aa).

Residue K6 is part of the active site. 95 to 105 (PVCAGLGGGSS) serves as a coordination point for ATP. The active site involves D137.

The protein belongs to the GHMP kinase family. IspE subfamily.

It carries out the reaction 4-CDP-2-C-methyl-D-erythritol + ATP = 4-CDP-2-C-methyl-D-erythritol 2-phosphate + ADP + H(+). It participates in isoprenoid biosynthesis; isopentenyl diphosphate biosynthesis via DXP pathway; isopentenyl diphosphate from 1-deoxy-D-xylulose 5-phosphate: step 3/6. Its function is as follows. Catalyzes the phosphorylation of the position 2 hydroxy group of 4-diphosphocytidyl-2C-methyl-D-erythritol. In Campylobacter jejuni subsp. jejuni serotype O:2 (strain ATCC 700819 / NCTC 11168), this protein is 4-diphosphocytidyl-2-C-methyl-D-erythritol kinase.